The following is a 190-amino-acid chain: Zinc finger C2H2 protein ECU03_0790 (190 aa).

4 consecutive C2H2-type zinc fingers follow at residues R4 to H27, Y33 to H55, Y85 to H108, and H119 to H142.

In Encephalitozoon cuniculi (strain GB-M1) (Microsporidian parasite), this protein is Zinc finger C2H2 protein ECU03_0790.